Reading from the N-terminus, the 3034-residue chain is Cadherin EGF LAG seven-pass G-type receptor 1 (3034 aa).

The N-terminal stretch at 1-29 is a signal peptide; sequence MAPSSPRVLPALVLLAAAALPALELGAAA. Residues 30–2484 lie on the Extracellular side of the membrane; the sequence is WELRVPGGAR…REHGEVLPLK (2455 aa). Positions 222–243 are enriched in low complexity; sequence GTPSESPSVSPSLLNLSQPRAG. The disordered stretch occupies residues 222-267; sequence GTPSESPSVSPSLLNLSQPRAGVVRRSRRGTGSSTSPQFPLPSYQV. Asn236 carries N-linked (GlcNAc...) asparagine glycosylation. Cadherin domains lie at 261-368, 369-474, 475-580, 581-702, 703-804, 805-907, 908-1014, 1015-1116, and 1121-1239; these read PLPS…SPVF, EQSE…YPQF, SEKR…APIF, VSSP…DPMF, TQPV…RPVF, QSSH…APRF, LRDF…PPVF, EKDE…PPEL, and ILFN…SPLL. 3 N-linked (GlcNAc...) asparagine glycosylation sites follow: Asn561, Asn649, and Asn793. 6 N-linked (GlcNAc...) asparagine glycosylation sites follow: Asn1129, Asn1154, Asn1228, Asn1264, Asn1274, and Asn1302. The EGF-like 1; calcium-binding domain maps to 1318-1376; the sequence is DDNICLREPCENYMKCVSVLRFDSSAPFISSTTVLFRPIHPITGLRCRCPPGFTGDYCE. Cystine bridges form between Cys1322–Cys1333, Cys1327–Cys1364, Cys1366–Cys1375, Cys1382–Cys1393, Cys1387–Cys1402, Cys1404–Cys1413, Cys1422–Cys1433, Cys1427–Cys1443, and Cys1445–Cys1455. An EGF-like 2; calcium-binding domain is found at 1378–1414; that stretch reads EIDLCYSNPCGANGRCRSREGGYTCECFEDFTGEHCQ. The EGF-like 3; calcium-binding domain occupies 1418 to 1456; the sequence is RSGRCASGVCKNGGTCVNLLIGGFHCVCPPGEYEHPYCE. Residues 1457 to 1661 enclose the Laminin G-like 1 domain; it reads VSTRSFPPQS…IANNGTRAGC (205 aa). 3 N-linked (GlcNAc...) asparagine glycosylation sites follow: Asn1591, Asn1638, and Asn1655. Cystine bridges form between Cys1635–Cys1661, Cys1668–Cys1679, Cys1673–Cys1688, Cys1690–Cys1699, Cys1855–Cys1885, Cys1891–Cys1902, Cys1896–Cys1911, Cys1913–Cys1922, Cys1926–Cys1937, Cys1931–Cys1949, Cys1951–Cys1960, Cys1968–Cys1981, and Cys1983–Cys1993. Residues 1664 to 1700 enclose the EGF-like 4; calcium-binding domain; that stretch reads QRNFCDGTSCQNGGTCVNRWNTYLCECPLRFGGKNCE. Asn1681 is modified ((3R)-3-hydroxyasparagine). Residues 1704-1885 form the Laminin G-like 2 domain; sequence PHPQRFTGES…ALKVRVKDGC (182 aa). The 36-residue stretch at 1887–1922 folds into the EGF-like 5; calcium-binding domain; sequence VEDPCASSPCPPHSHCRDTWDSYSCICDRGYFGKKC. Asp1904 bears the (3R)-3-hydroxyaspartate mark. The 39-residue stretch at 1923–1961 folds into the EGF-like 6; calcium-binding domain; it reads VDACLLNPCKHVAACVRSPNTPRGYSCECGPGHYGQYCE. One can recognise an EGF-like 7; calcium-binding domain in the interval 1962–1994; the sequence is NKVDLPCPKGWWGNPVCGPCHCAVSQGFDPDCN. Residue Asn1994 is glycosylated (N-linked (GlcNAc...) asparagine). The 36-residue stretch at 1996–2031 folds into the EGF-like 8; calcium-binding domain; it reads TNGQCQCKENYYKPPAQDACLPCDCFPHGSHSRACD. 5 disulfides stabilise this stretch: Cys2000-Cys2015, Cys2002-Cys2018, Cys2020-Cys2030, Cys2039-Cys2048, and Cys2051-Cys2063. In terms of domain architecture, Laminin EGF-like spans 2018–2065; it reads CDCFPHGSHSRACDMDTGQCACKPGVIGRQCNRCDNPFAEVTSLGCEV. Asn2118, Asn2137, Asn2144, Asn2155, Asn2160, and Asn2272 each carry an N-linked (GlcNAc...) asparagine glycan. A disordered region spans residues 2295 to 2346; it reads SVSFPADTFKPPEKKEGPVVRLTNRRTTPLTAQPEPRAERETSSSRRRRHPD. The 165-residue stretch at 2312–2476 folds into the GAIN-B domain; it reads PVVRLTNRRT…AVLMDISRRE (165 aa). 2 cysteine pairs are disulfide-bonded: Cys2426–Cys2458 and Cys2446–Cys2460. The tract at residues 2426–2476 is GPS; it reads CVFWNHSLDTGGTGGWSAKGCELLSRNRTHVTCQCSHSASCAVLMDISRRE. N-linked (GlcNAc...) asparagine glycans are attached at residues Asn2430 and Asn2452. Residues 2485–2505 traverse the membrane as a helical segment; that stretch reads IITYAALSLSLVALLVAFVLL. The Cytoplasmic portion of the chain corresponds to 2506 to 2516; that stretch reads SLVRTLRSNLH. Residues 2517–2537 traverse the membrane as a helical segment; that stretch reads SIHKNLITALFFSQLIFMVGI. Asn2538 carries N-linked (GlcNAc...) asparagine glycosylation. Residues 2538 to 2542 lie on the Extracellular side of the membrane; that stretch reads NQTEN. The chain crosses the membrane as a helical span at residues 2543 to 2563; it reads PFLCTVVAILLHYVSMGTFAW. At 2564 to 2587 the chain is on the cytoplasmic side; sequence TLVENLHVYRMLTEVRNIDTGPMR. The chain crosses the membrane as a helical span at residues 2588–2608; it reads FYHVVGWGIPAIVTGLAVGLD. Topologically, residues 2609-2625 are extracellular; sequence PQGYGNPDFCWLSLQDT. The helical transmembrane segment at 2626-2646 threads the bilayer; sequence LIWSFAGPVGTVIIINTVIFV. Topologically, residues 2647–2670 are cytoplasmic; that stretch reads LSAKVSCQRKHHYYERKGVVSMLR. The helical transmembrane segment at 2671 to 2691 threads the bilayer; the sequence is TAFLLLLLVTATWLLGLLAVN. The Extracellular portion of the chain corresponds to 2692 to 2694; sequence SDT. The helical transmembrane segment at 2695-2715 threads the bilayer; sequence LSFHYLFAAFSCLQGIFVLLF. Residues 2716–3034 are Cytoplasmic-facing; it reads HCVAHREVRK…QANGSDSEKP (319 aa). The tract at residues 2774–3034 is disordered; sequence TASLDSTTRD…QANGSDSEKP (261 aa). Ser2776, Ser2779, Ser2886, and Ser2888 each carry phosphoserine. A compositionally biased stretch (basic and acidic residues) spans 2893 to 2909; that stretch reads TEPHLKVETKVSVELHR. Residues 2976–2986 show a composition bias toward low complexity; the sequence is SPTSSRTSSLG. A compositionally biased stretch (basic and acidic residues) spans 3003-3012; the sequence is PRREPGREHL. Over residues 3020 to 3034 the composition is skewed to polar residues; sequence RTGSAQANGSDSEKP.

The protein belongs to the G-protein coupled receptor 2 family. LN-TM7 subfamily. The iron and 2-oxoglutarate dependent 3-hydroxylation of aspartate and asparagine is (R) stereospecific within EGF domains. Expressed in the brain, where it is localized principally in the ependymal cell layer, choroid plexus and the area postrema. Also found in spinal cord and in the eye.

The protein resides in the cell membrane. Receptor that may have an important role in cell/cell signaling during nervous system formation. In Mus musculus (Mouse), this protein is Cadherin EGF LAG seven-pass G-type receptor 1 (Celsr1).